The primary structure comprises 432 residues: Putative D-alanyl-D-alanine carboxypeptidase (432 aa).

The helical; Signal-anchor transmembrane segment at 7–25 (ATVLLTFSLSAFAVEYPVL) threads the bilayer.

The protein belongs to the peptidase S12 family. YfeW subfamily.

Its subcellular location is the cell inner membrane. The enzyme catalyses Preferential cleavage: (Ac)2-L-Lys-D-Ala-|-D-Ala. Also transpeptidation of peptidyl-alanyl moieties that are N-acyl substituents of D-alanine.. The sequence is that of Putative D-alanyl-D-alanine carboxypeptidase from Salmonella enteritidis PT4 (strain P125109).